The chain runs to 404 residues: LL-diaminopimelate aminotransferase (404 aa).

Residues Y15 and G42 each contribute to the substrate site. Pyridoxal 5'-phosphate contacts are provided by residues Y72, 108–109 (AK), Y132, N188, Y219, and 247–249 (SFS). Residues K109, Y132, and N188 each contribute to the substrate site. At K250 the chain carries N6-(pyridoxal phosphate)lysine. The pyridoxal 5'-phosphate site is built by R258 and N288. Substrate contacts are provided by N288 and R384.

The protein belongs to the class-I pyridoxal-phosphate-dependent aminotransferase family. LL-diaminopimelate aminotransferase subfamily. As to quaternary structure, homodimer. Pyridoxal 5'-phosphate serves as cofactor.

The enzyme catalyses (2S,6S)-2,6-diaminopimelate + 2-oxoglutarate = (S)-2,3,4,5-tetrahydrodipicolinate + L-glutamate + H2O + H(+). It participates in amino-acid biosynthesis; L-lysine biosynthesis via DAP pathway; LL-2,6-diaminopimelate from (S)-tetrahydrodipicolinate (aminotransferase route): step 1/1. Functionally, involved in the synthesis of meso-diaminopimelate (m-DAP or DL-DAP), required for both lysine and peptidoglycan biosynthesis. Catalyzes the direct conversion of tetrahydrodipicolinate to LL-diaminopimelate. The protein is LL-diaminopimelate aminotransferase of Lachnoclostridium phytofermentans (strain ATCC 700394 / DSM 18823 / ISDg) (Clostridium phytofermentans).